The following is a 348-amino-acid chain: AT-hook motif nuclear-localized protein 9 (348 aa).

Residues 18-156 (HRGLSGSGPP…MASVGELMPS (139 aa)) form a disordered region. Positions 31-46 (GSPQQQQGLRHLPNQN) are enriched in polar residues. Low complexity predominate over residues 47–60 (SPFGSGSTGFGSPS). A Bipartite nuclear localization signal motif is present at residues 98 to 106 (KRKRGRPRK). Positions 98 to 110 (KRKRGRPRKYGQD) form a DNA-binding region, a.T hook 1. Positions 112–131 (SVSLALSSSSVSTITPNNSN) are enriched in low complexity. Positions 132-144 (KRGRGRPPGSGKK) form a DNA-binding region, a.T hook 2. In terms of domain architecture, PPC spans 157–299 (SSGMSFTPHV…EEEASEVVQE (143 aa)).

It is found in the nucleus. Its function is as follows. Transcription factor that specifically binds AT-rich DNA sequences related to the nuclear matrix attachment regions (MARs). The sequence is that of AT-hook motif nuclear-localized protein 9 from Arabidopsis thaliana (Mouse-ear cress).